Here is a 381-residue protein sequence, read N- to C-terminus: Alanine racemase, catabolic (381 aa).

Lysine 55 functions as the Proton acceptor; specific for D-alanine in the catalytic mechanism. Position 55 is an N6-(pyridoxal phosphate)lysine (lysine 55). Arginine 154 provides a ligand contact to substrate. Tyrosine 276 (proton acceptor; specific for L-alanine) is an active-site residue. Methionine 322 serves as a coordination point for substrate.

It belongs to the alanine racemase family. Pyridoxal 5'-phosphate is required as a cofactor.

The catalysed reaction is L-alanine = D-alanine. Its function is as follows. Isomerizes L-alanine to D-alanine which is then oxidized to pyruvate by DadA. This chain is Alanine racemase, catabolic (dadB), found in Mesorhizobium japonicum (strain LMG 29417 / CECT 9101 / MAFF 303099) (Mesorhizobium loti (strain MAFF 303099)).